The following is a 567-amino-acid chain: TNF receptor-associated factor 3 (567 aa).

Residues 1–26 (MESSKKMDAAGTLQPNPPLKLQPDRG) form a disordered region. A Glycyl cysteine thioester (Cys-Gly) (interchain with G-Cter in ubiquitin) cross-link involves residue Cys-55. The RING-type zinc finger occupies 67-76 (CGHRFCESCM). Residue Lys-106 forms a Glycyl lysine isopeptide (Lys-Gly) (interchain with G-Cter in ubiquitin) linkage. Cys-123 participates in a covalent cross-link: Glycyl cysteine thioester (Cys-Gly) (interchain with G-Cter in ubiquitin). 2 consecutive TRAF-type zinc fingers follow at residues 134–189 (VHLK…IKLQ) and 190–248 (KHED…QQIK). Residues Lys-155 and Lys-167 each participate in a glycyl lysine isopeptide (Lys-Gly) (interchain with G-Cter in ubiquitin) cross-link. Residues 266-337 (SNSLEKKVSL…KLKELDKEIR (72 aa)) adopt a coiled-coil conformation. Residue Lys-328 forms a Glycyl lysine isopeptide (Lys-Gly) (interchain with G-Cter in ubiquitin) linkage. One can recognise an MATH domain in the interval 414-559 (NGVLIWKIRD…DDTIFIKVIV (146 aa)).

Belongs to the TNF receptor-associated factor family. A subfamily. As to quaternary structure, homotrimer. Heterotrimer with TRAF2 and TRAF5. Interacts with LTBR/TNFRSF3, TNFRSF4, TNFRSF5/CD40, TNFRSF8/CD30, TNFRSF13C TNFRSF17/BCMA, TLR4 and EDAR. Interacts with MAP3K5, MAP3K14, TRAIP/TRIP, TDP2/TTRAP, TANK/ITRAF and TRAF3IP1. Interaction with TNFRSF5/CD40 is modulated by TANK/ITRAF, which competes for the same binding site. Interacts with TICAM1. Interacts with TRAFD1. Interacts with OTUB1, OTUB2 and OTUD5. Interacts with RNF216, OPTN and TBK1. Identified in a complex with TRAF2, MAP3K14 and BIRC3. Upon exposure to bacterial lipopolysaccharide (LPS), recruited to a transient complex containing TLR4, TRAF3, TRAF6, IKBKG, MAP3K7, MYD88, TICAM1, BIRC2, BIRC3 and UBE2N. Interacts (via RING-type zinc finger domain) with SRC. Interacts with CARD14. Interacts (via MATH domain) with PTPN22; the interaction promotes TRAF3 polyubiquitination. Interacts with MAVS. Directly interacts with DDX3X; this interaction stimulates TRAF3 'Lys-63' ubiquitination. Interacts with IRF3. Interacts with IKBKE in the course of viral infection. Interacts with TRIM35. Interacts with GAPDH; promoting TRAF3 ubiquitination. Interacts with PPP3CA and PPP3CB. Interacts with RALGDS. Interacts with FBXO11. Post-translationally, undergoes 'Lys-48'-linked polyubiquitination, leading to its proteasomal degradation in response to signaling by TNFSF13B, TLR4 or through CD40. 'Lys-48'-linked polyubiquitinated form is deubiquitinated by OTUD7B, preventing TRAF3 proteolysis and over-activation of non-canonical NF-kappa-B. Undergoes 'Lys-63'-linked ubiquitination during early stages of virus infection, and 'Lys-48'-linked ubiquitination during later stages. Undergoes both 'Lys-48'-linked and 'Lys-63'-linked ubiquitination in response to TLR3 and TLR4 signaling. 'Lys-63'-linked ubiquitination can be mediated by TRIM35. Deubiquitinated by OTUB1, OTUB2 and OTUD5. Undergoes 'Lys-63'-linked deubiquitination by MYSM1 to terminate the pattern-recognition receptors/PRRs pathways. Ubiquitinated at Lys-328 by the SCF(FBXL2) complex, leading to its degradation by the proteasome. Undergoes 'Lys-48'-linked polyubiquitination, leading to its proteasomal degradation in response to signaling by TNFSF13B, TLR4 or through CD40. 'Lys-48'-linked polyubiquitinated form is deubiquitinated by OTUD7B, preventing TRAF3 proteolysis and over-activation of non-canonical NF-kappa-B. Undergoes 'Lys-63'-linked ubiquitination during early stages of virus infection, and 'Lys-48'-linked ubiquitination during later stages. Undergoes both 'Lys-48'-linked and 'Lys-63'-linked ubiquitination in response to TLR3 and TLR4 signaling. 'Lys-63'-linked ubiquitination can be mediated by TRIM35. Deubiquitinated by OTUB1, OTUB2 and OTUD5. Undergoes 'Lys-63'-linked deubiquitination by MYSM1 to terminate the pattern-recognition receptors/PRRs pathways. Also undergoes 'Lys-29'-linked ubiquitination on Cys-55 and Cys-123 by NEDD4L; leading to increased 'Lys-48'- and 'Lys-63'-linked ubiquitination as well as increased binding to TBK1. TLR4 signals emanating from bacteria containing vesicles trigger 'Lys-33'-linked polyubiquitination that promotes the assembly of the exocyst complex thereby connecting innate immune signaling to the cellular trafficking apparatus. Deubiquitinated by USP25 during viral infection, leading to TRAF3 stabilization and type I interferon production. 'Lys-63'-linked ubiquitination by FBXO11 in a NEDD8-dependent manner promotes the amplification of IFN-I signaling. Detected in bone marrow macrophages and spleen B-cells (at protein level). In adult, highest in brain. Also found in kidney, heart, thymus, spleen, lung, muscle, testis and ovary. Not found in liver.

It localises to the cytoplasm. The protein localises to the endosome. Its subcellular location is the mitochondrion. The enzyme catalyses S-ubiquitinyl-[E2 ubiquitin-conjugating enzyme]-L-cysteine + [acceptor protein]-L-lysine = [E2 ubiquitin-conjugating enzyme]-L-cysteine + N(6)-ubiquitinyl-[acceptor protein]-L-lysine.. Functionally, cytoplasmic E3 ubiquitin ligase that regulates various signaling pathways, such as the NF-kappa-B, mitogen-activated protein kinase (MAPK) and interferon regulatory factor (IRF) pathways, and thus controls a lot of biological processes in both immune and non-immune cell types. In TLR and RLR signaling pathways, acts as an E3 ubiquitin ligase promoting the synthesis of 'Lys-63'-linked polyubiquitin chains on several substrates such as ASC that lead to the activation of the type I interferon response or the inflammasome. Following the activation of certain TLRs such as TLR4, acts as a negative NF-kappa-B regulator, possibly to avoid unregulated inflammatory response, and its degradation via 'Lys-48'-linked polyubiquitination is required for MAPK activation and production of inflammatory cytokines. Alternatively, when TLR4 orchestrates bacterial expulsion, TRAF3 undergoes 'Lys-33'-linked polyubiquitination and subsequently binds to RALGDS, mobilizing the exocyst complex to rapidly expel intracellular bacteria back for clearance. Also acts as a constitutive negative regulator of the alternative NF-kappa-B pathway, which controls B-cell survival and lymphoid organ development. Required for normal antibody isotype switching from IgM to IgG. Plays a role T-cell dependent immune responses. Down-regulates proteolytic processing of NFKB2, and thereby inhibits non-canonical activation of NF-kappa-B. Promotes ubiquitination and proteasomal degradation of MAP3K14. This Mus musculus (Mouse) protein is TNF receptor-associated factor 3.